Here is a 330-residue protein sequence, read N- to C-terminus: DNA-directed RNA polymerase subunit alpha (330 aa).

An alpha N-terminal domain (alpha-NTD) region spans residues 1-225 (MSDLAIPTIS…KQFASLVSHS (225 aa)). Residues 237 to 330 (VKYTIPEEKY…KKKNKGIDED (94 aa)) form an alpha C-terminal domain (alpha-CTD) region.

It belongs to the RNA polymerase alpha chain family. Homodimer. The RNAP catalytic core consists of 2 alpha, 1 beta, 1 beta' and 1 omega subunit. When a sigma factor is associated with the core the holoenzyme is formed, which can initiate transcription.

The catalysed reaction is RNA(n) + a ribonucleoside 5'-triphosphate = RNA(n+1) + diphosphate. DNA-dependent RNA polymerase catalyzes the transcription of DNA into RNA using the four ribonucleoside triphosphates as substrates. The sequence is that of DNA-directed RNA polymerase subunit alpha from Dehalococcoides mccartyi (strain CBDB1).